A 516-amino-acid chain; its full sequence is High-affinity nitrate transporter 2.3 (516 aa).

The next 12 helical transmembrane spans lie at 52-72 (WFSFFCCFVSTFAAPPLLPLI), 76-96 (LGLTATDIGNAGIASVSGAVF), 112-132 (LASASLILLTTPAVYCSSIIQ), 142-162 (FFTGISLASFVSAQFWMSSMF), 172-192 (GVAGGWGNLGGGAVQLLMPLV), 209-229 (IAFFIPGLMQTFSAIAVLAFG), 265-285 (WILALTYGYSFGVELTIDNVV), 299-319 (TAGLIAASFGMANIISRPGGG), 335-354 (LWGLWTVQTIGGVLCVVLGI), 367-387 (VLFSFFVQAACGLTFGIVPFV), 395-415 (ISGMTGGGGNVGAVLTQYIFF), and 425-445 (GIKYMGLMIIACTLPVMLIYF). Residues 489–516 (SVREGGRSSANGGQPRHTVPVDASPAGV) are disordered.

This sequence belongs to the major facilitator superfamily. Nitrate/nitrite porter (TC 2.A.1.8) family. Heterotetramer composed of two NRT2.3 and two NAR2.1. Isoform 1 interacts with NAR2.1, but not isoform 2. As to expression, expressed in the stelar cells of both primary and lateral roots, particularly at the site of lateral root emergence, root-shoot junction zone, vascular tissues of adventitious root primordia, leaves, germ tips and seed scutellum.

The protein resides in the cell membrane. Involved in nitrate transport, but does not seem to be able to mediate transport by its own. Acts as a dual component transporter with NAR2.1. Imports nitrate with high affinity when expressed with NAR2.1 in a heterologous system (Xenopus oocytes). Plays a key role in long-distance nitrate transport from root to shoot particularly at low external nitrate supply. The polypeptide is High-affinity nitrate transporter 2.3 (NRT2.3) (Oryza sativa subsp. japonica (Rice)).